We begin with the raw amino-acid sequence, 309 residues long: Homoserine kinase (309 aa).

An ATP-binding site is contributed by 91–101 (PLARGLGSSAA).

Belongs to the GHMP kinase family. Homoserine kinase subfamily.

It localises to the cytoplasm. It carries out the reaction L-homoserine + ATP = O-phospho-L-homoserine + ADP + H(+). It participates in amino-acid biosynthesis; L-threonine biosynthesis; L-threonine from L-aspartate: step 4/5. Functionally, catalyzes the ATP-dependent phosphorylation of L-homoserine to L-homoserine phosphate. In Bacillus velezensis (strain DSM 23117 / BGSC 10A6 / LMG 26770 / FZB42) (Bacillus amyloliquefaciens subsp. plantarum), this protein is Homoserine kinase.